Here is a 54-residue protein sequence, read N- to C-terminus: Large ribosomal subunit protein bL33 (54 aa).

This sequence belongs to the bacterial ribosomal protein bL33 family.

This is Large ribosomal subunit protein bL33 from Corynebacterium diphtheriae (strain ATCC 700971 / NCTC 13129 / Biotype gravis).